A 475-amino-acid polypeptide reads, in one-letter code: Ribulose bisphosphate carboxylase large chain (475 aa).

Residues 1-2 (MS) constitute a propeptide that is removed on maturation. Pro3 is subject to N-acetylproline. Lys14 is modified (N6,N6,N6-trimethyllysine). Residues Asn123 and Thr173 each contribute to the substrate site. Lys175 serves as the catalytic Proton acceptor. Lys177 lines the substrate pocket. 3 residues coordinate Mg(2+): Lys201, Asp203, and Glu204. Lys201 bears the N6-carboxylysine mark. His294 functions as the Proton acceptor in the catalytic mechanism. Substrate is bound by residues Arg295, His327, and Ser379.

The protein belongs to the RuBisCO large chain family. Type I subfamily. In terms of assembly, heterohexadecamer of 8 large chains and 8 small chains; disulfide-linked. The disulfide link is formed within the large subunit homodimers. Mg(2+) is required as a cofactor. The disulfide bond which can form in the large chain dimeric partners within the hexadecamer appears to be associated with oxidative stress and protein turnover.

Its subcellular location is the plastid. The protein localises to the chloroplast. It catalyses the reaction 2 (2R)-3-phosphoglycerate + 2 H(+) = D-ribulose 1,5-bisphosphate + CO2 + H2O. The enzyme catalyses D-ribulose 1,5-bisphosphate + O2 = 2-phosphoglycolate + (2R)-3-phosphoglycerate + 2 H(+). RuBisCO catalyzes two reactions: the carboxylation of D-ribulose 1,5-bisphosphate, the primary event in carbon dioxide fixation, as well as the oxidative fragmentation of the pentose substrate in the photorespiration process. Both reactions occur simultaneously and in competition at the same active site. The sequence is that of Ribulose bisphosphate carboxylase large chain from Betula papyrifera (Paper birch).